Reading from the N-terminus, the 294-residue chain is Glutamyl-Q tRNA(Asp) synthetase (294 aa).

Residues 8-12 and Glu-44 each bind L-glutamate; that span reads RFAPT. A 'HIGH' region motif is present at residues 11-21; it reads PTPSGYLHFGS. Positions 100, 102, 114, and 118 each coordinate Zn(2+). Tyr-171 and Arg-189 together coordinate L-glutamate. Residues 227–231 carry the 'KMSKS' region motif; sequence KLGKS. Lys-230 lines the ATP pocket.

It belongs to the class-I aminoacyl-tRNA synthetase family. GluQ subfamily. Requires Zn(2+) as cofactor.

Functionally, catalyzes the tRNA-independent activation of glutamate in presence of ATP and the subsequent transfer of glutamate onto a tRNA(Asp). Glutamate is transferred on the 2-amino-5-(4,5-dihydroxy-2-cyclopenten-1-yl) moiety of the queuosine in the wobble position of the QUC anticodon. The sequence is that of Glutamyl-Q tRNA(Asp) synthetase from Ectopseudomonas mendocina (strain ymp) (Pseudomonas mendocina).